Consider the following 418-residue polypeptide: MPMLLPHPHQHFLKGLLRAPFRCYHFIFHSSTHLGSGIPCAQPFNSLGLHCTKWMLLSDGLKRKLCVQTTLKDHTEGLSDKEQRFVDKLYTGLIQGQRACLAEAITLVESTHSRKKELAQVLLQKVLLYHREQEQSNKGKPLAFRVGLSGPPGAGKSTFIEYFGKMLTERGHKLSVLAVDPSSCTSGGSLLGDKTRMTELSRDMNAYIRPSPTRGTLGGVTRTTNEAILLCEGAGYDIILIETVGVGQSEFAVADMVDMFVLLLPPAGGDELQGIKRGIIEMADLVAVTKSDGDLIVPARRIQAEYVSALKLLRKRSQVWKPKVIRISARSGEGISEMWDKMKDFQDLMLASGELTAKRRKQQKVWMWNLIQESVLEHFRTHPTVREQIPLLEQKVLIGALSPGLAADFLLKAFKSRD.

The transit peptide at 1-65 directs the protein to the mitochondrion; that stretch reads MPMLLPHPHQ…LLSDGLKRKL (65 aa). GTP contacts are provided by residues 150 to 158, Asp292, and 328 to 330; these read GPPGAGKST and SAR.

The protein belongs to the SIMIBI class G3E GTPase family. ArgK/MeaB subfamily. Homodimer. Interacts with MMUT (the apoenzyme form); the interaction is GTP dependent. Widely expressed. Highest expression is observed in liver and skeletal muscle.

The protein resides in the mitochondrion. Its subcellular location is the cytoplasm. The enzyme catalyses GTP + H2O = GDP + phosphate + H(+). GTPase activity is stimulated by MMUT. Its function is as follows. GTPase, binds and hydrolyzes GTP. Involved in intracellular vitamin B12 metabolism, mediates the transport of cobalamin (Cbl) into mitochondria for the final steps of adenosylcobalamin (AdoCbl) synthesis. Functions as a G-protein chaperone that assists AdoCbl cofactor delivery from MMAB to the methylmalonyl-CoA mutase (MMUT). Plays a dual role as both a protectase and a reactivase for MMUT. Protects MMUT from progressive inactivation by oxidation by decreasing the rate of the formation of the oxidized inactive cofactor hydroxocobalamin (OH2Cbl). Additionally acts a reactivase by promoting the replacement of OH2Cbl by the active cofactor AdoCbl, restoring the activity of MMUT in the presence and hydrolysis of GTP. This chain is Methylmalonic aciduria type A protein, mitochondrial, found in Homo sapiens (Human).